A 234-amino-acid chain; its full sequence is Leucyl/phenylalanyl-tRNA--protein transferase (234 aa).

It belongs to the L/F-transferase family.

It is found in the cytoplasm. The enzyme catalyses N-terminal L-lysyl-[protein] + L-leucyl-tRNA(Leu) = N-terminal L-leucyl-L-lysyl-[protein] + tRNA(Leu) + H(+). The catalysed reaction is N-terminal L-arginyl-[protein] + L-leucyl-tRNA(Leu) = N-terminal L-leucyl-L-arginyl-[protein] + tRNA(Leu) + H(+). It carries out the reaction L-phenylalanyl-tRNA(Phe) + an N-terminal L-alpha-aminoacyl-[protein] = an N-terminal L-phenylalanyl-L-alpha-aminoacyl-[protein] + tRNA(Phe). In terms of biological role, functions in the N-end rule pathway of protein degradation where it conjugates Leu, Phe and, less efficiently, Met from aminoacyl-tRNAs to the N-termini of proteins containing an N-terminal arginine or lysine. The chain is Leucyl/phenylalanyl-tRNA--protein transferase from Nitrosomonas eutropha (strain DSM 101675 / C91 / Nm57).